The sequence spans 199 residues: MAP6 domain-containing protein 1 (199 aa).

3 S-palmitoyl cysteine lipidation sites follow: cysteine 5, cysteine 10, and cysteine 11. Positions 33–110 are disordered; it reads YSDLDSEEPG…SAQSSAPPAP (78 aa). A Phosphoserine modification is found at serine 38. 2 mn regions span residues 130-143 and 165-177; these read TTSY…WTGV and DSSP…VPEV. At serine 167 the chain carries Phosphoserine.

Belongs to the STOP family. As to quaternary structure, interacts with calmodulin. In terms of processing, palmitoylated. Palmitoylation enhances association with microtubules.

It is found in the golgi apparatus. Its subcellular location is the cytoplasm. The protein localises to the cytoskeleton. In terms of biological role, may have microtubule-stabilizing activity. The polypeptide is MAP6 domain-containing protein 1 (MAP6D1) (Homo sapiens (Human)).